The primary structure comprises 317 residues: RHOMBOID-like protein 2 (317 aa).

Helical transmembrane passes span Ser-33–Val-53, Trp-118–Ile-138, Val-149–Gln-169, Ile-172–Leu-192, Ala-202–Pro-222, Val-224–Leu-244, and Leu-272–Phe-292. The active-site Nucleophile is the Ser-177. The active-site Charge relay system is His-229.

The protein belongs to the peptidase S54 family. Expressed in roots, seedlings, leaves, stems and flowers.

It localises to the golgi apparatus membrane. The catalysed reaction is Cleaves type-1 transmembrane domains using a catalytic dyad composed of serine and histidine that are contributed by different transmembrane domains.. Rhomboid-type serine protease that catalyzes intramembrane proteolysis. Can cleave the Drosophila proteins Spitz and Keren. May function in pollen elongation. The chain is RHOMBOID-like protein 2 from Arabidopsis thaliana (Mouse-ear cress).